We begin with the raw amino-acid sequence, 1775 residues long: Internalin I (1775 aa).

The first 28 residues, 1 to 28 (MKKKFSIVIISVLLLGYLAPFDTLLVGA), serve as a signal peptide directing secretion. A compositionally biased stretch (low complexity) spans 36–50 (DTTVKTAETETATEA). A disordered region spans residues 36–97 (DTTVKTAETE…SNIKTEINTD (62 aa)). A compositionally biased stretch (basic and acidic residues) spans 58–85 (DNEKAEEPKEAEASKETTEKEEKAKTKE). LRR repeat units follow at residues 152-176 (AISQ…EGLQ), 180-201 (NLTS…KDLV), 202-224 (NLVS…EGLV), 225-247 (NLQE…AALP), 248-269 (VLKE…NPAG), 274-295 (ELET…AKLP), 296-318 (KLKN…KGAT), 319-341 (KLQL…SGLS), 342-364 (ELEM…KDLP), 365-386 (NLVN…NNLP), 387-409 (KLQT…TDMP), 410-431 (QLKT…DNLP), 432-453 (KLEK…NDLP), 454-475 (RLSY…KKLP), 476-497 (LLEW…TNFP), 498-519 (SLNY…TELP), 520-541 (SLKE…HDMP), 542-563 (NLRK…DNLP), 564-585 (KLQN…HDLP), 586-607 (SLET…DNLP), 608-629 (ELTY…GDLP), 630-650 (KLEI…GTMD), 654-675 (KLRN…GNLS), 682-704 (NLTE…STLS), 705-726 (RLIY…SNLT), 727-748 (TLQE…SDLD), and 749-770 (NLNK…ANMV). In terms of domain architecture, LRRCT spans 782–869 (TYTLPTVLSY…SAVKVTANAE (88 aa)). 3 consecutive MucBP domains span residues 1507–1566 (DAAA…EQTV), 1572–1631 (AIEP…PQTI), and 1641–1702 (SKKS…SQTV). Residues 1713-1737 (SKDEPKVKGKTNQPPSADTKLKVDN) form a disordered region. Residues 1740–1744 (LPATG) carry the LPXTG sorting signal motif. At threonine 1743 the chain carries Pentaglycyl murein peptidoglycan amidated threonine. The propeptide at 1744-1775 (GDTENMALAVLIGFNMLLVASIFLFRKPKTNQ) is removed by sortase.

Belongs to the internalin family.

Its subcellular location is the secreted. The protein resides in the cell wall. In terms of biological role, a role in virulence could not be demonstrated. In Listeria monocytogenes serotype 4b (strain F2365), this protein is Internalin I (inlI).